A 561-amino-acid chain; its full sequence is Arginine--tRNA ligase (561 aa).

The short motif at 123–133 is the 'HIGH' region element; sequence PNIAKDMHVGH.

Belongs to the class-I aminoacyl-tRNA synthetase family. In terms of assembly, monomer.

It is found in the cytoplasm. The catalysed reaction is tRNA(Arg) + L-arginine + ATP = L-arginyl-tRNA(Arg) + AMP + diphosphate. This chain is Arginine--tRNA ligase (argS), found in Chlamydia pneumoniae (Chlamydophila pneumoniae).